A 620-amino-acid chain; its full sequence is Chaperone protein DnaK (620 aa).

The segment at 579–620 (KAQKEASAGAEASEDASGPSSTGSASDDDVVDADYEVVDEDK) is disordered. Residues 583 to 603 (EASAGAEASEDASGPSSTGSA) are compositionally biased toward low complexity. The span at 604-620 (SDDDVVDADYEVVDEDK) shows a compositional bias: acidic residues.

Belongs to the heat shock protein 70 family.

Acts as a chaperone. The chain is Chaperone protein DnaK from Methanococcoides burtonii (strain DSM 6242 / NBRC 107633 / OCM 468 / ACE-M).